The following is a 752-amino-acid chain: Mitochondrial Rho GTPase 1 (752 aa).

The Cytoplasmic segment spans residues 1–671 (MRKDVRIVLA…RNALSYGTNR (671 aa)). The 169-residue stretch at 2 to 170 (RKDVRIVLAG…FYFAQKAVLY (169 aa)) folds into the Miro 1 domain. GTP-binding positions include 11 to 18 (GDPDVGKS), 57 to 61 (DTSSS), and 115 to 118 (NKID). 2 EF-hand domains span residues 186-221 (ACVD…CFDT) and 333-368 (NGYQ…APDN). Positions 199, 201, 203, 210, 346, 348, 350, and 357 each coordinate Ca(2+). The interval 426–460 (SSGSASTPAPIPLTPTGPPGSRPSRNRTPCPPSTI) is disordered. Positions 434–446 (APIPLTPTGPPGS) are enriched in pro residues. Positions 481 to 651 (RSVFLGFVLG…YGLICTIAVD (171 aa)) constitute a Miro 2 domain. GTP-binding positions include 490–497 (GAAGSGKT), 526–530 (EQAGA), and 595–598 (TKAD). The chain crosses the membrane as a helical; Anchor for type IV membrane protein span at residues 672–692 (WQFWGYIGLVVIGGGGAVWIC). At 693 to 752 (AKVLKVPIGSTLGFGSSASTTSWWLSGAQARGAGGPNATKVSSWFDWIRWQSSSNVRSEL) the chain is on the mitochondrial intermembrane side.

Belongs to the mitochondrial Rho GTPase family.

Its subcellular location is the mitochondrion outer membrane. Mitochondrial GTPase involved in mitochondrial trafficking. Probably involved in control of anterograde transport of mitochondria and their subcellular distribution. The protein is Mitochondrial Rho GTPase 1 (GEM1) of Mycosarcoma maydis (Corn smut fungus).